A 486-amino-acid chain; its full sequence is MSSLEQFVQVVIDSPSPYTNLDRIYVHNRILGLVGEDQPVEATDEQVTSLVDALVKTAVQNGKIEDAQSDRSILADQLMDLVTPLPSILNQRFWDKYQVSPKAATDYFFNLSKTNDYIKTRAIAKNVSFPAETDFGELEITINLSKPEKDPKAIAAARNQPQDGYPLCQLCMQNEGYLGRLGYPSRSNHRIIRMTLGGETWGFQYSPYAYFNEHSIFLDQIHRPMVINRQTFTNLLEIVKQLPHYFVGSNADLPIVGGSMLSHEHYQGGRHVFPMMKAPIARTIDLGVAGVEAGIVKWPMSTIRLVGSDVVALTDAAVKIHDAWMNYSDESVDVRAFTDGTRHHTTTPIAYKDGENYVLDVVLRDNQTSAEFPDGIFHPHQDVQHIKKENIGLIEVMGRAILPARLKTELVEVEKYLLGQTNQMAEMHQAWADQLKATNSITAENVTAVVNAAVGNVFARVLADAGVFKWDDAGEAAFARFISAIN.

This sequence belongs to the galactose-1-phosphate uridylyltransferase type 2 family.

The protein resides in the cytoplasm. It carries out the reaction alpha-D-galactose 1-phosphate + UDP-alpha-D-glucose = alpha-D-glucose 1-phosphate + UDP-alpha-D-galactose. It participates in carbohydrate metabolism; galactose metabolism. The protein is Galactose-1-phosphate uridylyltransferase of Pediococcus pentosaceus (strain ATCC 25745 / CCUG 21536 / LMG 10740 / 183-1w).